A 466-amino-acid chain; its full sequence is UDP-N-acetylmuramoylalanine--D-glutamate ligase (466 aa).

121–127 (GTNGKST) is an ATP binding site.

Belongs to the MurCDEF family.

Its subcellular location is the cytoplasm. The enzyme catalyses UDP-N-acetyl-alpha-D-muramoyl-L-alanine + D-glutamate + ATP = UDP-N-acetyl-alpha-D-muramoyl-L-alanyl-D-glutamate + ADP + phosphate + H(+). It participates in cell wall biogenesis; peptidoglycan biosynthesis. Its function is as follows. Cell wall formation. Catalyzes the addition of glutamate to the nucleotide precursor UDP-N-acetylmuramoyl-L-alanine (UMA). The sequence is that of UDP-N-acetylmuramoylalanine--D-glutamate ligase from Bradyrhizobium diazoefficiens (strain JCM 10833 / BCRC 13528 / IAM 13628 / NBRC 14792 / USDA 110).